Consider the following 481-residue polypeptide: Bifunctional protein GlmU (481 aa).

Positions 1–235 are pyrophosphorylase; sequence MTHKERPLDV…PDEVMGANDR (235 aa). UDP-N-acetyl-alpha-D-glucosamine contacts are provided by residues 13–16, Lys27, Gln78, 83–84, 107–109, Gly146, Glu161, Asn176, and Asn233; these read LAAG, GT, and YGD. Asp109 is a binding site for Mg(2+). Asn233 contacts Mg(2+). Residues 236–256 are linker; it reads VQLAQAAAVLRRRINTAHMQA. The interval 257-481 is N-acetyltransferase; the sequence is GVTLQDPSTI…PWLAGWLERQ (225 aa). Residues Arg339 and Lys357 each coordinate UDP-N-acetyl-alpha-D-glucosamine. The active-site Proton acceptor is His369. UDP-N-acetyl-alpha-D-glucosamine is bound by residues Tyr372 and Asn383. Acetyl-CoA contacts are provided by Ala386, Ser411, Ala429, and Arg446.

It in the N-terminal section; belongs to the N-acetylglucosamine-1-phosphate uridyltransferase family. This sequence in the C-terminal section; belongs to the transferase hexapeptide repeat family. As to quaternary structure, homotrimer. Mg(2+) is required as a cofactor.

It localises to the cytoplasm. The catalysed reaction is alpha-D-glucosamine 1-phosphate + acetyl-CoA = N-acetyl-alpha-D-glucosamine 1-phosphate + CoA + H(+). It carries out the reaction N-acetyl-alpha-D-glucosamine 1-phosphate + UTP + H(+) = UDP-N-acetyl-alpha-D-glucosamine + diphosphate. Its pathway is nucleotide-sugar biosynthesis; UDP-N-acetyl-alpha-D-glucosamine biosynthesis; N-acetyl-alpha-D-glucosamine 1-phosphate from alpha-D-glucosamine 6-phosphate (route II): step 2/2. It functions in the pathway nucleotide-sugar biosynthesis; UDP-N-acetyl-alpha-D-glucosamine biosynthesis; UDP-N-acetyl-alpha-D-glucosamine from N-acetyl-alpha-D-glucosamine 1-phosphate: step 1/1. The protein operates within bacterial outer membrane biogenesis; LPS lipid A biosynthesis. Functionally, catalyzes the last two sequential reactions in the de novo biosynthetic pathway for UDP-N-acetylglucosamine (UDP-GlcNAc). The C-terminal domain catalyzes the transfer of acetyl group from acetyl coenzyme A to glucosamine-1-phosphate (GlcN-1-P) to produce N-acetylglucosamine-1-phosphate (GlcNAc-1-P), which is converted into UDP-GlcNAc by the transfer of uridine 5-monophosphate (from uridine 5-triphosphate), a reaction catalyzed by the N-terminal domain. This chain is Bifunctional protein GlmU, found in Deinococcus geothermalis (strain DSM 11300 / CIP 105573 / AG-3a).